Here is a 685-residue protein sequence, read N- to C-terminus: tRNA 5-methylaminomethyl-2-thiouridine biosynthesis bifunctional protein MnmC (685 aa).

The tract at residues 1-272 (MTAEPNKPCQ…MAAILSSATQ (272 aa)) is tRNA (mnm(5)s(2)U34)-methyltransferase. The segment at 278–685 (IGGGLASAHL…LRKLLKGKAL (408 aa)) is FAD-dependent cmnm(5)s(2)U34 oxidoreductase.

The protein in the N-terminal section; belongs to the methyltransferase superfamily. tRNA (mnm(5)s(2)U34)-methyltransferase family. It in the C-terminal section; belongs to the DAO family. It depends on FAD as a cofactor.

The protein resides in the cytoplasm. It catalyses the reaction 5-aminomethyl-2-thiouridine(34) in tRNA + S-adenosyl-L-methionine = 5-methylaminomethyl-2-thiouridine(34) in tRNA + S-adenosyl-L-homocysteine + H(+). Functionally, catalyzes the last two steps in the biosynthesis of 5-methylaminomethyl-2-thiouridine (mnm(5)s(2)U) at the wobble position (U34) in tRNA. Catalyzes the FAD-dependent demodification of cmnm(5)s(2)U34 to nm(5)s(2)U34, followed by the transfer of a methyl group from S-adenosyl-L-methionine to nm(5)s(2)U34, to form mnm(5)s(2)U34. The chain is tRNA 5-methylaminomethyl-2-thiouridine biosynthesis bifunctional protein MnmC from Shewanella baltica (strain OS185).